Consider the following 95-residue polypeptide: Integration host factor subunit beta (95 aa).

Residues 59-95 are disordered; sequence RVGRNPKTGQSVRLDGKFVPHFKPGKELRDRVNEDES. The span at 72 to 95 shows a compositional bias: basic and acidic residues; the sequence is LDGKFVPHFKPGKELRDRVNEDES.

This sequence belongs to the bacterial histone-like protein family. As to quaternary structure, heterodimer of an alpha and a beta chain.

Functionally, this protein is one of the two subunits of integration host factor, a specific DNA-binding protein that functions in genetic recombination as well as in transcriptional and translational control. The chain is Integration host factor subunit beta from Ectopseudomonas mendocina (strain ymp) (Pseudomonas mendocina).